A 504-amino-acid chain; its full sequence is Signal recognition particle subunit SRP54 (504 aa).

Residues Met-1 to Leu-295 form an NG domain region. GTP contacts are provided by residues Gly-108 to Thr-115, Asp-190 to Arg-194, and Thr-248 to Asp-251. The tract at residues Gly-296–Met-504 is M-domain.

This sequence belongs to the GTP-binding SRP family. SRP54 subfamily. Component of a signal recognition particle (SRP) complex that consists of a 7SL RNA molecule of 300 nucleotides and six protein subunits: SRP72, SRP68, SRP54, SRP19, SRP14 and SRP9. Interacts with RNPS1. Interacts with the SRP receptor subunit SRPRA.

Its subcellular location is the nucleus speckle. The protein localises to the cytoplasm. The protein resides in the endoplasmic reticulum. The catalysed reaction is GTP + H2O = GDP + phosphate + H(+). In terms of biological role, component of the signal recognition particle (SRP) complex, a ribonucleoprotein complex that mediates the cotranslational targeting of secretory and membrane proteins to the endoplasmic reticulum (ER). As part of the SRP complex, associates with the SRP receptor (SR) component SRPRA to target secretory proteins to the endoplasmic reticulum membrane. Binds to the signal sequence of presecretory proteins when they emerge from the ribosomes. Displays basal GTPase activity, and stimulates reciprocal GTPase activation of the SR subunit SRPRA. Forms a guanosine 5'-triphosphate (GTP)-dependent complex with the SR subunit SRPRA. SR compaction and GTPase mediated rearrangement of SR drive SRP-mediated cotranslational protein translocation into the ER. Requires the presence of SRP9/SRP14 and/or SRP19 to stably interact with RNA. Plays a role in proliferation and differentiation of granulocytic cells, neutrophils migration capacity and exocrine pancreas development. The protein is Signal recognition particle subunit SRP54 of Homo sapiens (Human).